Consider the following 146-residue polypeptide: [Ribosomal protein bS18]-alanine N-acetyltransferase (146 aa).

In terms of domain architecture, N-acetyltransferase spans 2 to 146 (SIISQIEACD…ENAVVMACYL (145 aa)). Position 69–71 (69–71 (IAI)) interacts with acetyl-CoA. Glu103 serves as the catalytic Proton acceptor. Residue Asn108 coordinates acetyl-CoA. Tyr114 (proton donor) is an active-site residue.

It belongs to the acetyltransferase family. RimI subfamily.

Its subcellular location is the cytoplasm. The catalysed reaction is N-terminal L-alanyl-[ribosomal protein bS18] + acetyl-CoA = N-terminal N(alpha)-acetyl-L-alanyl-[ribosomal protein bS18] + CoA + H(+). Functionally, acetylates the N-terminal alanine of ribosomal protein bS18. The chain is [Ribosomal protein bS18]-alanine N-acetyltransferase from Haemophilus influenzae (strain ATCC 51907 / DSM 11121 / KW20 / Rd).